We begin with the raw amino-acid sequence, 243 residues long: 2-C-methyl-D-erythritol 4-phosphate cytidylyltransferase (243 aa).

This sequence belongs to the IspD/TarI cytidylyltransferase family. IspD subfamily.

The catalysed reaction is 2-C-methyl-D-erythritol 4-phosphate + CTP + H(+) = 4-CDP-2-C-methyl-D-erythritol + diphosphate. The protein operates within isoprenoid biosynthesis; isopentenyl diphosphate biosynthesis via DXP pathway; isopentenyl diphosphate from 1-deoxy-D-xylulose 5-phosphate: step 2/6. In terms of biological role, catalyzes the formation of 4-diphosphocytidyl-2-C-methyl-D-erythritol from CTP and 2-C-methyl-D-erythritol 4-phosphate (MEP). This chain is 2-C-methyl-D-erythritol 4-phosphate cytidylyltransferase, found in Colwellia psychrerythraea (strain 34H / ATCC BAA-681) (Vibrio psychroerythus).